A 185-amino-acid chain; its full sequence is Bacteriocin UviA (185 aa).

Its function is as follows. May have a role in bacteriocin secretion or immunity. The protein is Bacteriocin UviA (uviA) of Clostridium perfringens.